Reading from the N-terminus, the 161-residue chain is Peroxynitrite isomerase 2 (161 aa).

The short motif at 17–23 is the GXWXGXG element; sequence GTWAGQG. Histidine 152 is a heme b binding site.

This sequence belongs to the nitrobindin family. In terms of assembly, homodimer. Requires heme b as cofactor.

It catalyses the reaction peroxynitrite = nitrate. Its pathway is nitrogen metabolism. Heme-binding protein able to scavenge peroxynitrite and to protect free L-tyrosine against peroxynitrite-mediated nitration, by acting as a peroxynitrite isomerase that converts peroxynitrite to nitrate. Therefore, this protein likely plays a role in peroxynitrite sensing and in the detoxification of reactive nitrogen and oxygen species (RNS and ROS, respectively). Is able to bind nitric oxide (NO) in vitro, but may act as a sensor of peroxynitrite levels in vivo. This Mycobacterium marinum (strain ATCC BAA-535 / M) protein is Peroxynitrite isomerase 2.